The following is an 801-amino-acid chain: LPS-assembly protein LptD (801 aa).

An N-terminal signal peptide occupies residues 1 to 23 (MARLFSLKPLVLALGFCFGTHCA).

This sequence belongs to the LptD family. As to quaternary structure, component of the lipopolysaccharide transport and assembly complex. Interacts with LptE and LptA.

It is found in the cell outer membrane. Its function is as follows. Together with LptE, is involved in the assembly of lipopolysaccharide (LPS) at the surface of the outer membrane. This is LPS-assembly protein LptD from Neisseria gonorrhoeae (strain ATCC 700825 / FA 1090).